The following is a 300-amino-acid chain: Free fatty acid receptor 1 (300 aa).

At 1 to 8 the chain is on the extracellular side; that stretch reads MDLPPQLS. A helical transmembrane segment spans residues 9-31; it reads FALYVAAFALGFPLNVLAIRGAR. The Cytoplasmic portion of the chain corresponds to 32–41; it reads AHARRRLTPS. The chain crosses the membrane as a helical span at residues 42-64; the sequence is LVYALNLGCSDLLLTVSLPLKAV. Residues 65–79 lie on the Extracellular side of the membrane; it reads EALASGAWPLPASLC. Cys79 and Cys170 form a disulfide bridge. A helical membrane pass occupies residues 80-101; that stretch reads PVFGVAHFAPLYAGGGFLAALS. Topologically, residues 102-121 are cytoplasmic; sequence AGRYLGAAFPLGYQAFRRPC. The helical transmembrane segment at 122–142 threads the bilayer; that stretch reads YSWGVCAAIWALVLCHLGLVF. At 143-178 the chain is on the extracellular side; that stretch reads VLEAPGGWLDHSNTSLGINTPVNGSPVCLEAWDPAS. The N-linked (GlcNAc...) asparagine glycan is linked to Asn155. A helical transmembrane segment spans residues 179 to 200; it reads AGPARFSLSLLLFFLPLAITAF. Residues 201-223 are Cytoplasmic-facing; the sequence is CYVGCLRALAHSGLTHRRKLRAA. The chain crosses the membrane as a helical span at residues 224–248; it reads WVAGGALLTLLLCVGPYNASNVASF. Residues 249-256 are Extracellular-facing; that stretch reads LNPNLGGS. Residues 257–279 traverse the membrane as a helical segment; sequence WRKLGLITGAWSVVLNPLVTGYL. Residues 280 to 300 lie on the Cytoplasmic side of the membrane; it reads GRGPGLKTVCAARTQGSTSQK.

The protein belongs to the G-protein coupled receptor 1 family.

The protein resides in the cell membrane. Its function is as follows. G-protein coupled receptor for medium and long chain saturated and unsaturated fatty acids that plays an important role in glucose homeostasis. Fatty acid binding increases glucose-stimulated insulin secretion, and may also enhance the secretion of glucagon-like peptide 1 (GLP-1). May also play a role in bone homeostasis; receptor signaling activates pathways that inhibit osteoclast differentiation. Ligand binding leads to a conformation change that triggers signaling via G-proteins that activate phospholipase C, leading to an increase of the intracellular calcium concentration. Seems to act through a G(q) and G(i)-mediated pathway. Mediates the anti-inflammatory effects of omega-3 polyunsaturated fatty acids (PUFAs) via inhibition of NLRP3 inflammasome activation. This is Free fatty acid receptor 1 (FFAR1) from Macaca fascicularis (Crab-eating macaque).